Consider the following 302-residue polypeptide: 4-diphosphocytidyl-2-C-methyl-D-erythritol kinase (302 aa).

The active site involves Lys-13. 101–111 provides a ligand contact to ATP; it reads PVASGIGGGSS. Asp-143 is a catalytic residue.

This sequence belongs to the GHMP kinase family. IspE subfamily.

The enzyme catalyses 4-CDP-2-C-methyl-D-erythritol + ATP = 4-CDP-2-C-methyl-D-erythritol 2-phosphate + ADP + H(+). The protein operates within isoprenoid biosynthesis; isopentenyl diphosphate biosynthesis via DXP pathway; isopentenyl diphosphate from 1-deoxy-D-xylulose 5-phosphate: step 3/6. Its function is as follows. Catalyzes the phosphorylation of the position 2 hydroxy group of 4-diphosphocytidyl-2C-methyl-D-erythritol. This Granulibacter bethesdensis (strain ATCC BAA-1260 / CGDNIH1) protein is 4-diphosphocytidyl-2-C-methyl-D-erythritol kinase.